A 1462-amino-acid chain; its full sequence is NK-tumor recognition protein (1462 aa).

The 166-residue stretch at 10 to 175 (HFDIEINREP…ADVRVIDCGV (166 aa)) folds into the PPIase cyclophilin-type domain. 2 disordered regions span residues 187 to 591 (KKRK…TMAQ) and 607 to 627 (VIPL…KPWK). The span at 198–213 (SDSSSNSSSSSESSSE) shows a compositional bias: low complexity. The span at 221–240 (SRRRKHKRRPKVKRSKKRRK) shows a compositional bias: basic residues. 2 stretches are compositionally biased toward basic and acidic residues: residues 241–250 (EASSSEEPRN) and 258–286 (GHSE…RPEE). Lysine 323 is covalently cross-linked (Glycyl lysine isopeptide (Lys-Gly) (interchain with G-Cter in SUMO2)). Positions 329 to 345 (SGRKIKGRGTIRYHTPP) are enriched in basic residues. Phosphoserine occurs at positions 379, 401, and 416. Residues 382-402 (KWSKGDKLSDPCSSRWDERSL) show a composition bias toward basic and acidic residues. Positions 403 to 421 (SQRSRSWSYNGYYSDLSTA) are enriched in polar residues. The span at 423-459 (HSGHHKKRRKEKKVKHKKKGKKQKHCRRHKQTKKRRI) shows a compositional bias: basic residues. Phosphoserine occurs at positions 463 and 471. Over residues 497-507 (KRDWSKSDKDV) the composition is skewed to basic and acidic residues. The segment covering 524 to 542 (HSQSYSRGSSRSRTASKSS) has biased composition (low complexity). Positions 543–568 (SHSRSRSKSRSSSKSGHRKRASKSPR) are enriched in basic residues. Residues lysine 578 and lysine 581 each participate in a glycyl lysine isopeptide (Lys-Gly) (interchain with G-Cter in SUMO2) cross-link. Position 613 is a phosphoserine (serine 613). Residue lysine 639 forms a Glycyl lysine isopeptide (Lys-Gly) (interchain with G-Cter in SUMO2) linkage. A Phosphoserine modification is found at serine 648. Glycyl lysine isopeptide (Lys-Gly) (interchain with G-Cter in SUMO2) cross-links involve residues lysine 656 and lysine 666. Positions 658–1072 (TGSSSSYHKR…EEDLSGKHDT (415 aa)) are disordered. Composition is skewed to low complexity over residues 699–725 (SRSY…PSSR) and 736–749 (SQCS…SISS). Basic residues predominate over residues 754-774 (RAKRRLRSSGKKNSVSHKKHS). The span at 775 to 800 (SSSEKTLHSKYVKGRDRSSCVRKYSE) shows a compositional bias: basic and acidic residues. Residues 801 to 815 (SRSSLDYSSDSEQSS) are compositionally biased toward low complexity. 2 stretches are compositionally biased toward basic and acidic residues: residues 823 to 870 (QEKE…DHLR) and 885 to 909 (WDSE…SSDK). Phosphoserine occurs at positions 866, 887, 889, 891, and 907. Acidic residues predominate over residues 910 to 922 (EEGEATSDSESEV). Positions 932–969 (TTKSSTNTSLPDDNGAWKSSKQRTSTSDSEGSCSNSEN) are enriched in polar residues. Basic residues predominate over residues 988 to 1013 (EHTKKVKEKLKGKKDKKHKAPKRKQA). Residues 1022–1031 (FGEEEEEEID) show a composition bias toward acidic residues. Residues 1032 to 1072 (DKQVTQESKEKKVSENNETIKDNILKTEKSSEEDLSGKHDT) show a composition bias toward basic and acidic residues. Residue lysine 1057 forms a Glycyl lysine isopeptide (Lys-Gly) (interchain with G-Cter in SUMO2) linkage. A phosphoserine mark is found at serine 1077 and serine 1146. Positions 1129 to 1156 (MEICTPDRSSPAKVEETSPLGNARLDTP) are disordered. A Phosphothreonine modification is found at threonine 1155. Residue lysine 1163 forms a Glycyl lysine isopeptide (Lys-Gly) (interchain with G-Cter in SUMO2) linkage. Residues 1169–1215 (EHPQAEVVKQESSMSESKVLGEVGKQDSSSASLASAGESTGKKEVAE) are disordered. Lysine 1177 is covalently cross-linked (Glycyl lysine isopeptide (Lys-Gly) (interchain with G-Cter in SUMO1); alternate). Lysine 1177 is covalently cross-linked (Glycyl lysine isopeptide (Lys-Gly) (interchain with G-Cter in SUMO2); alternate). Serine 1203 is subject to Phosphoserine. Glycyl lysine isopeptide (Lys-Gly) (interchain with G-Cter in SUMO2) cross-links involve residues lysine 1216, lysine 1225, and lysine 1258. Residues 1251 to 1462 (LTTVPEMKPQ…RSPSESSRYS (212 aa)) are disordered. Residues 1311-1348 (SRSPSRSRSKSETKSRHRTRSVSYSHSRSRSRSSTSSY) form an arg/Ser tandem repeat-rich region. Composition is skewed to low complexity over residues 1331 to 1351 (SVSY…YRSR) and 1359 to 1376 (RGWY…SYRS). Over residues 1377-1388 (YKSHRTSSRSRS) the composition is skewed to basic residues. Positions 1389–1410 (RSSSYDPHSRSRSYTYDSYYSR) are enriched in low complexity. A compositionally biased stretch (basic residues) spans 1425-1435 (RGRSYNRRSRS).

The protein resides in the cell membrane. The enzyme catalyses [protein]-peptidylproline (omega=180) = [protein]-peptidylproline (omega=0). Its activity is regulated as follows. Inhibited by cyclosporin A (CsA). In terms of biological role, PPIase that catalyzes the cis-trans isomerization of proline imidic peptide bonds in oligopeptides and may therefore assist protein folding. Component of a putative tumor-recognition complex involved in the function of NK cells. This is NK-tumor recognition protein from Homo sapiens (Human).